Consider the following 344-residue polypeptide: Endo-1,4-beta-xylanase UM03411 (344 aa).

The first 21 residues, 1-21 (MKTNFLVLLSALLAASSAVTA), serve as a signal peptide directing secretion. Residues 35 to 338 (QRAGSSLNAA…KPAYNAVLST (304 aa)) enclose the GH10 domain. Catalysis depends on Glu166, which acts as the Proton donor. Asn171 is a glycosylation site (N-linked (GlcNAc...) asparagine). Glu275 acts as the Nucleophile in catalysis. Cys293 and Cys299 are joined by a disulfide. N-linked (GlcNAc...) asparagine glycans are attached at residues Asn310 and Asn323.

The protein belongs to the glycosyl hydrolase 10 (cellulase F) family.

It localises to the secreted. The catalysed reaction is Endohydrolysis of (1-&gt;4)-beta-D-xylosidic linkages in xylans.. Its pathway is glycan degradation; xylan degradation. Functionally, endo-1,4-beta-xylanase involved in the hydrolysis of xylan, a major structural heterogeneous polysaccharide found in plant biomass representing the second most abundant polysaccharide in the biosphere, after cellulose. This is Endo-1,4-beta-xylanase UM03411 from Mycosarcoma maydis (Corn smut fungus).